The chain runs to 309 residues: Dihydroorotate dehydrogenase B (NAD(+)), catalytic subunit (309 aa).

FMN-binding positions include serine 21 and 45–46 (KA). Substrate contacts are provided by residues lysine 45 and 69–73 (NAIGL). Positions 99 and 127 each coordinate FMN. Asparagine 127 provides a ligand contact to substrate. Cysteine 130 serves as the catalytic Nucleophile. FMN is bound by residues lysine 165 and isoleucine 191. Residue 192–193 (NT) coordinates substrate. FMN is bound by residues glycine 217, 243–244 (GG), and 265–266 (GT).

The protein belongs to the dihydroorotate dehydrogenase family. Type 1 subfamily. As to quaternary structure, heterotetramer of 2 PyrK and 2 PyrD type B subunits. FMN serves as cofactor.

Its subcellular location is the cytoplasm. The catalysed reaction is (S)-dihydroorotate + NAD(+) = orotate + NADH + H(+). Its pathway is pyrimidine metabolism; UMP biosynthesis via de novo pathway; orotate from (S)-dihydroorotate (NAD(+) route): step 1/1. In terms of biological role, catalyzes the conversion of dihydroorotate to orotate with NAD(+) as electron acceptor. The chain is Dihydroorotate dehydrogenase B (NAD(+)), catalytic subunit (pyrD) from Bacillus mycoides (strain KBAB4) (Bacillus weihenstephanensis).